The primary structure comprises 206 residues: Ras-related protein O-RAL (206 aa).

21–28 (GSGGVGKS) lines the GTP pocket. An Effector region motif is present at residues 43-51 (YEPTKADSY). GTP-binding positions include 68-72 (DTAGQ) and 128-131 (NKSD). The span at 180–189 (KMSENKDKNG) shows a compositional bias: basic and acidic residues. Residues 180–206 (KMSENKDKNGKKSSRNKKSLRERCCIL) are disordered. The residue at position 203 (Cys-203) is a Cysteine methyl ester. Cys-203 carries the S-geranylgeranyl cysteine lipid modification. Positions 204–206 (CIL) are cleaved as a propeptide — removed in mature form.

The protein belongs to the small GTPase superfamily. Ras family.

The protein localises to the cell membrane. It carries out the reaction GTP + H2O = GDP + phosphate + H(+). This is Ras-related protein O-RAL from Diplobatis ommata (Ocellated electric ray).